We begin with the raw amino-acid sequence, 420 residues long: POU domain, class 4, transcription factor 1 (420 aa).

The POU-IV box motif lies at 57 to 66 (RAEALAAVDI). Disordered stretches follow at residues 94 to 117 (STVP…GDLL) and 132 to 200 (GGAG…XGHL). Residues 99–108 (AHHHHHHHHH) are compositionally biased toward basic residues. Composition is skewed to gly residues over residues 132–165 (GGAG…GPGV) and 172–184 (PGGG…GGLL). Residues 261–338 (DSDTDPRELE…ILQAWLEEAE (78 aa)) form the POU-specific domain. The segment at residues 356-415 (KKRKRTSIAAPEKRSLEAYFAVQPRPSSEKIAAIAEKLDLKKNVVRVWFCNQRQKQKRMK) is a DNA-binding region (homeobox).

Belongs to the POU transcription factor family. Class-4 subfamily. In terms of assembly, interacts (via N-terminus) with RIT2; the interaction controls POU4F1 transactivation activity on some neuronal target genes. Isoform 1 interacts with POU4F2; this interaction inhibits both POU4F1 DNA-binding and transcriptional activities. Isoform 1 interacts (C-terminus) with ESR1 (via DNA-binding domain); this interaction decreases the estrogen receptor ESR1 transcriptional activity in a DNA- and ligand 17-beta-estradiol-independent manner. Detected in brain, spinal cord and dorsal root ganglion. Isoform 2 is detected in brain, spinal cord, dorsal root ganglion and spleen.

The protein resides in the nucleus. The protein localises to the cytoplasm. Functionally, multifunctional transcription factor with different regions mediating its different effects. Acts by binding (via its C-terminal domain) to sequences related to the consensus octamer motif 5'-ATGCAAAT-3' in the regulatory regions of its target genes. Regulates the expression of specific genes involved in differentiation and survival within a subset of neuronal lineages. It has been shown that activation of some of these genes requires its N-terminal domain, maybe through a neuronal-specific cofactor. Activates BCL2 expression and protects neuronal cells from apoptosis (via the N-terminal domain). Induces neuronal process outgrowth and the coordinate expression of genes encoding synaptic proteins. Exerts its major developmental effects in somatosensory neurons and in brainstem nuclei involved in motor control. Stimulates the binding affinity of the nuclear estrogene receptor ESR1 to DNA estrogen response element (ERE), and hence modulates ESR1-induced transcriptional activity. May positively regulate POU4F2 and POU4F3. Regulates dorsal root ganglion sensory neuron specification and axonal projection into the spinal cord. Plays a role in TNFSF11-mediated terminal osteoclast differentiation. Negatively regulates its own expression interacting directly with a highly conserved autoregulatory domain surrounding the transcription initiation site. Its function is as follows. Able to act as transcription factor, cannot regulate the expression of the same subset of genes than isoform 1. Does not have anitapoptotic effect on neuronal cells. This is POU domain, class 4, transcription factor 1 (Pou4f1) from Rattus norvegicus (Rat).